Reading from the N-terminus, the 196-residue chain is Pyridoxal 5'-phosphate synthase subunit PdxT (196 aa).

An L-glutamine-binding site is contributed by 47-49 (GES). C79 (nucleophile) is an active-site residue. Residues R106 and 134-135 (IR) contribute to the L-glutamine site. Catalysis depends on charge relay system residues H170 and E172.

Belongs to the glutaminase PdxT/SNO family. As to quaternary structure, in the presence of PdxS, forms a dodecamer of heterodimers. Only shows activity in the heterodimer.

The catalysed reaction is aldehydo-D-ribose 5-phosphate + D-glyceraldehyde 3-phosphate + L-glutamine = pyridoxal 5'-phosphate + L-glutamate + phosphate + 3 H2O + H(+). The enzyme catalyses L-glutamine + H2O = L-glutamate + NH4(+). The protein operates within cofactor biosynthesis; pyridoxal 5'-phosphate biosynthesis. Functionally, catalyzes the hydrolysis of glutamine to glutamate and ammonia as part of the biosynthesis of pyridoxal 5'-phosphate. The resulting ammonia molecule is channeled to the active site of PdxS. This chain is Pyridoxal 5'-phosphate synthase subunit PdxT, found in Bacillus thuringiensis subsp. konkukian (strain 97-27).